The following is a 409-amino-acid chain: Shaggy-related protein kinase gamma (409 aa).

N-acetylalanine is present on alanine 2. The 285-residue stretch at tyrosine 73–phenylalanine 357 folds into the Protein kinase domain. ATP-binding positions include valine 79–valine 87 and lysine 102. The active-site Proton acceptor is the aspartate 198. Tyrosine 233 carries the post-translational modification Phosphotyrosine.

The protein belongs to the protein kinase superfamily. CMGC Ser/Thr protein kinase family. GSK-3 subfamily. As to quaternary structure, binds to KIB1. Component of a complex made of POLAR, BASL, ASK7/BIN2 and ASK3/SK12. Binds to POLAR and BASL. Post-translationally, autophosphorylated mainly on threonine and serine residues. Roots, shoots and leaves.

Its subcellular location is the cytoplasm. It is found in the cell cortex. It carries out the reaction L-seryl-[protein] + ATP = O-phospho-L-seryl-[protein] + ADP + H(+). The enzyme catalyses L-threonyl-[protein] + ATP = O-phospho-L-threonyl-[protein] + ADP + H(+). Functionally, may mediate extracellular signals to regulate transcription in differentiating cells. Probably involved first at the cortical polarity site, to restrict MAPK signaling and promote asymmetric cell division (ACD), and second in the nucleus of stomatal lineage ground cells (SLGCs) or meristemoids, to limit cell division and to promote differentiation into pavement or stomatal guard cells, respectively. Phosphorylate YDA and SPCH in vitro. This chain is Shaggy-related protein kinase gamma, found in Arabidopsis thaliana (Mouse-ear cress).